Reading from the N-terminus, the 211-residue chain is Protein-L-isoaspartate O-methyltransferase (211 aa).

Residue serine 62 is part of the active site.

This sequence belongs to the methyltransferase superfamily. L-isoaspartyl/D-aspartyl protein methyltransferase family.

It is found in the cytoplasm. It carries out the reaction [protein]-L-isoaspartate + S-adenosyl-L-methionine = [protein]-L-isoaspartate alpha-methyl ester + S-adenosyl-L-homocysteine. Its function is as follows. Catalyzes the methyl esterification of L-isoaspartyl residues in peptides and proteins that result from spontaneous decomposition of normal L-aspartyl and L-asparaginyl residues. It plays a role in the repair and/or degradation of damaged proteins. The chain is Protein-L-isoaspartate O-methyltransferase from Shewanella baltica (strain OS223).